The following is a 383-amino-acid chain: Homoserine O-succinyltransferase (383 aa).

One can recognise an AB hydrolase-1 domain in the interval 51–361; sequence NALLICHALS…ESDFGHDAFL (311 aa). The active-site Nucleophile is the S157. Substrate is bound at residue R227. Residues D324 and H357 contribute to the active site. D358 is a substrate binding site.

This sequence belongs to the AB hydrolase superfamily. MetX family. Homodimer.

The protein localises to the cytoplasm. The catalysed reaction is L-homoserine + succinyl-CoA = O-succinyl-L-homoserine + CoA. Its pathway is amino-acid biosynthesis; L-methionine biosynthesis via de novo pathway; O-succinyl-L-homoserine from L-homoserine: step 1/1. Functionally, transfers a succinyl group from succinyl-CoA to L-homoserine, forming succinyl-L-homoserine. This is Homoserine O-succinyltransferase from Teredinibacter turnerae (strain ATCC 39867 / T7901).